Here is a 187-residue protein sequence, read N- to C-terminus: Protein lethal(2)essential for life (187 aa).

The region spanning 61-170 (NSLQKQESGS…TERLVQITQT (110 aa)) is the sHSP domain. The interval 151 to 187 (APMKALPPPQTERLVQITQTGPSSKEDNAKKVETSTA) is disordered. A compositionally biased stretch (basic and acidic residues) spans 174–187 (SKEDNAKKVETSTA).

Belongs to the small heat shock protein (HSP20) family. Ubiquitously expressed during embryogenesis with no sign of tissue specificity in expression up to stage 16.

Functionally, vital role in embryonic development. The protein is Protein lethal(2)essential for life (l(2)efl) of Drosophila melanogaster (Fruit fly).